The following is a 128-amino-acid chain: UPF0102 protein PSPTO_4420 (128 aa).

It belongs to the UPF0102 family.

The protein is UPF0102 protein PSPTO_4420 of Pseudomonas syringae pv. tomato (strain ATCC BAA-871 / DC3000).